Reading from the N-terminus, the 136-residue chain is Secreted RxLR effector protein 10 (136 aa).

Residues 1–22 (MRVLNFVLTTTVVLLTSSEGIA) form the signal peptide. The short motif at 42–56 (RSLRATENPGSDESR) is the RxLR-dEER element. A disordered region spans residues 42–78 (RSLRATENPGSDESRLNEKDTGFDPDGSSSKEDEDIG). Over residues 53–63 (DESRLNEKDTG) the composition is skewed to basic and acidic residues.

It belongs to the RxLR effector family.

The protein localises to the secreted. It is found in the host cytoplasm. Its subcellular location is the host nucleus. In terms of biological role, effector that acts as a broad suppressor of cell death to interrupt plant immunity. Inhibits cell death induced by cell death-inducing proteins, including the PAMP elicitor INF1 from P.infestans. The polypeptide is Secreted RxLR effector protein 10 (Plasmopara viticola (Downy mildew of grapevine)).